Here is a 955-residue protein sequence, read N- to C-terminus: MRRININASVALWTVFTILTIWISFALHQPDVQTCDIARTWISTAHVEGFDSKHSRFGEKYSLHLIRASQHAIPQPIRPSGVPVIFVHGNAGGFRQIGPFAGIAQELNDELRLLTKGDAGTEFDFFSIDFNEAYSALHGRTLLDQAEYLNDAIAYILDMYKRNQQEGLQVPESVIVLGHSMGGIVSRVAVTLENYRPQSVNTIITLASPHLIPAATFDADITKVYHLVNDYWRAAFAEGDTNDNPLRDITILSIAGGKSDTMVPSDYVSLDSLVPATNGLSTFTNSIARVWTGIDHDAVMWCHQLRRQIASALFHIVDPNVPSQTKPREVRMSTFHRSFSGSQSLSSAMQDFINIEATPLQDGVEQRLAPGFYWGRNLQMLTNHVINYDSNIDLYERKSGSLLKVWQCRSRQGSSFRQCKRIYPLFVPGINDSVLSHVSVNGILLLDVSKEASESGDWINIDETSMSAAPFNIYGNIVFSTSNMVSQDIAFPALTSGLISYKVLTSGGVGLIRQYMGRNHPSRTYDSKYLIPHYARVDISFHGDGAPFVPFKLKTPTKTDLSTKSYKAPLHLQVFGQGKVTISVDYVGSLGNLFMRYRTLLFSLPTAVLYAVLLLQFWRYYQSGSDAKFLSLRDATGLFIKQYLSWACLVVAGLSFVIKFEFIRDFLHFIQIPATGSSKSYEIETFYGSLYTHIDLFLGISGPIGVVLAPAFLALATGIVVVVTEIVIAVTTLASLAISRGHRKMSLLQTPKNVTIQSSDDPIGDLLHKRTVIIALMALLVLLFVPYQLAFALATASLLALTAYFDAEESASASHDLSTSLYANRQAQEKVGSFINYATTMSVVMVWTTLVNIPVLAVWVQGMVFGRSTIFSSHHNLLSVLPTLLFIENLSFRRMPERGLPFVTYIILGYACFNCTAYGMMHAFMIHHWFNLLAGWLLITSYKRNKTVIKESRIE.

Asn-7 carries an N-linked (GlcNAc...) asparagine glycan. A helical transmembrane segment spans residues 8–28 (ASVALWTVFTILTIWISFALH). Residue Ser-180 is part of the active site. Asn-431 is a glycosylation site (N-linked (GlcNAc...) asparagine). 4 consecutive transmembrane segments (helical) span residues 489–509 (IAFP…SGGV), 600–620 (LLFS…FWRY), 643–663 (YLSW…FEFI), and 703–723 (PIGV…VVVV). N-linked (GlcNAc...) asparagine glycosylation occurs at Asn-753. A run of 3 helical transmembrane segments spans residues 772 to 792 (VIIA…LAFA), 840 to 860 (TMSV…AVWV), and 870 to 890 (IFSS…IENL). An N-linked (GlcNAc...) asparagine glycan is attached at Asn-914. A helical transmembrane segment spans residues 919–939 (GMMHAFMIHHWFNLLAGWLLI). Asn-945 is a glycosylation site (N-linked (GlcNAc...) asparagine).

This sequence belongs to the GPI inositol-deacylase family.

The protein localises to the endoplasmic reticulum membrane. Its function is as follows. Involved in inositol deacylation of GPI-anchored proteins which plays important roles in the quality control and ER-associated degradation of GPI-anchored proteins. The sequence is that of GPI inositol-deacylase B (BST1B) from Yarrowia lipolytica (strain CLIB 122 / E 150) (Yeast).